The following is a 432-amino-acid chain: Glutamyl-tRNA reductase (432 aa).

Substrate contacts are provided by residues 49–52 (TCNR), Ser-109, 114–116 (EGQ), and Gln-120. Cys-50 functions as the Nucleophile in the catalytic mechanism. 198-203 (GAGRMS) lines the NADP(+) pocket.

This sequence belongs to the glutamyl-tRNA reductase family. As to quaternary structure, homodimer.

It catalyses the reaction (S)-4-amino-5-oxopentanoate + tRNA(Glu) + NADP(+) = L-glutamyl-tRNA(Glu) + NADPH + H(+). It functions in the pathway porphyrin-containing compound metabolism; protoporphyrin-IX biosynthesis; 5-aminolevulinate from L-glutamyl-tRNA(Glu): step 1/2. Its pathway is porphyrin-containing compound metabolism; chlorophyll biosynthesis. Functionally, catalyzes the NADPH-dependent reduction of glutamyl-tRNA(Glu) to glutamate 1-semialdehyde (GSA). This Parasynechococcus marenigrum (strain WH8102) protein is Glutamyl-tRNA reductase.